A 241-amino-acid chain; its full sequence is Venom nerve growth factor 2 (241 aa).

Residues 1–18 form the signal peptide; that stretch reads MSMLCYTLITAFLIGIWA. A propeptide spanning residues 19-125 is cleaved from the precursor; it reads APKSEDNVPL…SLNRNIRAKR (107 aa). A disordered region spans residues 47–67; sequence GLKTSRNTDQRHPAPQKAEDQ. 3 cysteine pairs are disulfide-bonded: cysteine 139–cysteine 203, cysteine 181–cysteine 231, and cysteine 191–cysteine 233.

This sequence belongs to the NGF-beta family. As to quaternary structure, homodimer; non-covalently linked. As to expression, expressed by the venom gland.

It localises to the secreted. Its function is as follows. Nerve growth factor is important for the development and maintenance of the sympathetic and sensory nervous systems. It stimulates division and differentiation of sympathetic and embryonic sensory neurons as well as basal forebrain cholinergic neurons in the brain. Its relevance in the snake venom is not clear. However, it has been shown to inhibit metalloproteinase-dependent proteolysis of platelet glycoprotein Ib alpha, suggesting a metalloproteinase inhibition to prevent metalloprotease autodigestion and/or protection against prey proteases. Binds a lipid between the two protein chains in the homodimer. The lipid-bound form promotes histamine relase from mouse mast cells, contrary to the lipid-free form. This chain is Venom nerve growth factor 2, found in Naja sputatrix (Malayan spitting cobra).